A 451-amino-acid chain; its full sequence is Phosphoglucosamine mutase (451 aa).

Ser101 (phosphoserine intermediate) is an active-site residue. Residues Ser101, Asp240, Asp242, and Asp244 each coordinate Mg(2+). Ser101 is modified (phosphoserine).

This sequence belongs to the phosphohexose mutase family. Mg(2+) is required as a cofactor. Activated by phosphorylation.

The catalysed reaction is alpha-D-glucosamine 1-phosphate = D-glucosamine 6-phosphate. Catalyzes the conversion of glucosamine-6-phosphate to glucosamine-1-phosphate. This Streptococcus pyogenes serotype M1 protein is Phosphoglucosamine mutase.